The sequence spans 913 residues: Protein SEY1 homolog (913 aa).

The Cytoplasmic segment spans residues 1–825 (MTDVNKTQII…ETGGHMSLKN (825 aa)). One can recognise a GB1/RHD3-type G domain in the interval 33 to 288 (GFNYNVIAIL…IPADGFAQYC (256 aa)). 43–50 (GSQSSGKS) provides a ligand contact to GTP. Residues 826 to 846 (VPFAFWVILLILGWNEILMFT) form a helical membrane-spanning segment. Topologically, residues 847 to 849 (RLF) are lumenal. Residues 850–870 (FRLNIILPMLIGFIIIVISCL) traverse the membrane as a helical segment. The Cytoplasmic portion of the chain corresponds to 871–913 (YTGNAQILSYINKIIFIVIKNLYNFYKHLQTIGHQTTKPEKVE).

This sequence belongs to the TRAFAC class dynamin-like GTPase superfamily. GB1/RHD3 GTPase family. RHD3 subfamily.

It is found in the endoplasmic reticulum membrane. In terms of biological role, probable GTP-binding protein involved in generating and maintaining the structure of the tubular endoplasmic reticulum network. The protein is Protein SEY1 homolog of Plasmodium berghei (strain Anka).